A 361-amino-acid polypeptide reads, in one-letter code: Mitogen-activated protein kinase 14 (361 aa).

The region spanning 25–309 (YQNLTPVGSG…AAEALAHSYF (285 aa)) is the Protein kinase domain. ATP contacts are provided by residues 31 to 39 (VGSGAYGSV) and Lys-54. Asp-151 acts as the Proton acceptor in catalysis. Thr-181 bears the Phosphothreonine mark. The TXY motif lies at 181-183 (TGY). The residue at position 183 (Tyr-183) is a Phosphotyrosine.

It belongs to the protein kinase superfamily. CMGC Ser/Thr protein kinase family. MAP kinase subfamily. The cofactor is Mg(2+). In terms of processing, dually phosphorylated on Thr-181 and Tyr-183, which activates the enzyme.

It catalyses the reaction L-seryl-[protein] + ATP = O-phospho-L-seryl-[protein] + ADP + H(+). The enzyme catalyses L-threonyl-[protein] + ATP = O-phospho-L-threonyl-[protein] + ADP + H(+). Its activity is regulated as follows. Activated by tyrosine and threonine phosphorylation. Its function is as follows. Serine/threonine kinase which acts as an essential component of the MAP kinase signal transduction pathway. mapk14a is one of the four p38 MAPKs which play an important role in the cascades of cellular responses evoked by extracellular stimuli such as pro-inflammatory cytokines or physical stress leading to direct activation of transcription factors. Accordingly, p38 MAPKs phosphorylate a broad range of proteins and it has been estimated that they may have approximately 200 to 300 substrates each. Some of the targets are downstream kinases which are activated through phosphorylation and further phosphorylate additional targets. MPK2 is activated by upstream MAPKK/MAPKKK and stimulates MAPKAP kinase 2 to phosphorylate small heat shock proteins. Does not phosphorylate myelin basic protein or MAPKAP kinase 1. The chain is Mitogen-activated protein kinase 14 (mapk14) from Xenopus laevis (African clawed frog).